The primary structure comprises 208 residues: MTKPYVRLDKNDAAVLLVDHQAGLLSLVRDIEPDKFKNNVLALGDLAKYFNLPTILTTSFETGPNGPLVPELKAQFPDTPYIARPGNINAWDNEDFVKAVKATGKKQLIIAGVVTEVCVAFPALSAIEEGFDVFVVTDASGTFNEITRHSAWDRLSQAGAQLMTWFGVACELHRDWRNDIEGLATLFSNHIPDYRNLMTSYDTLTKQK.

C118 is an active-site residue.

As to quaternary structure, homooctamer composed of two tetrameric rings.

This is Probable hydrolase YcaC (ycaC) from Escherichia coli (strain K12).